The chain runs to 351 residues: Transcription factor Atoh1 (351 aa).

Disordered stretches follow at residues 16–39 and 89–116; these read LGDH…PATL and EAAA…SKSP. Positions 26-36 are enriched in pro residues; the sequence is HHVPPLTPQPP. Residues 156-208 enclose the bHLH domain; sequence QRRLAANARERRRMHGLNHAFDQLRNVIPSFNNDKKLSKYETLQMAQIYINAL. 2 disordered regions span residues 244 to 278 and 308 to 351; these read GAGA…GPAS and LSPS…DEAS. Residues 247–256 show a composition bias toward low complexity; it reads ASAVAGAQPA. Pro residues predominate over residues 258–268; that stretch reads GGGPRPTPPGP. The segment covering 332-351 has biased composition (basic and acidic residues); it reads HRSDGEFSPHSHYSDSDEAS.

Efficient DNA binding requires dimerization with another bHLH protein. As to expression, developing nervous system, and in adult epithelial cells of the gastrointestinal tract.

It localises to the nucleus. Functionally, transcriptional regulator. Activates E box-dependent transcription in collaboration with TCF3/E47, but the activity is completely antagonized by the negative regulator of neurogenesis HES1. Plays a role in the differentiation of subsets of neural cells by activating E box-dependent transcription. The sequence is that of Transcription factor Atoh1 from Mus musculus (Mouse).